Consider the following 481-residue polypeptide: MLPASGLAVLLVTALKFSTAAPSLPAASPRTSRNNYRLAQAYLDKYYTKKGGPQIGEMVARGGNSTVKKIKELQEFFGLRVTGKLDRATMDVIKRPRCGVPDVANYRLFPGEPKWKKNTLTYRISKYTPSMTPAEVDRAMEMALRAWSSAVPLNFVRINAGEADIMISFETGDHGDSYPFDGPRGTLAHAFAPGEGLGGDTHFDNAEKWTMGTNGFNLFTVAAHEFGHALGLAHSTDPSALMFPTYKYQNPYGFRLPKDDVKGIQALYGPRRAFSGKPTAPHGPPHNPSIPDLCDSNLSFDAVTMLGKELLLFRDRIFWRRQVHLMSGIRPSTITSSFPQLMSNVDAAYEVAERGTAYFFKGPHYWITRGFQMQGPPRTIYDFGFPRYVQRIDAAVYLKDAQKTLFFVGDEYYSYDERKRKMEKDYPKSTEEEFSGVNGQIDAAVELNGYIYFFSGPKAYKSDTEKEDVVSELKSSSWIGC.

Positions 1–20 are cleaved as a signal peptide; the sequence is MLPASGLAVLLVTALKFSTA. The propeptide occupies 21–105; that stretch reads APSLPAASPR…PRCGVPDVAN (85 aa). A glycan (N-linked (GlcNAc...) asparagine) is linked at Asn64. The Cysteine switch motif lies at 96–103; the sequence is PRCGVPDV. Cys98 serves as a coordination point for Zn(2+). Ca(2+) is bound by residues Glu162, Ala163, and Asp164. Zn(2+) is bound by residues His174 and Asp176. Ca(2+)-binding residues include Asp181, Gly182, Arg184, and Thr186. Residue His189 coordinates Zn(2+). Positions 195, 196, 198, and 200 each coordinate Ca(2+). Zn(2+) is bound at residue His202. 2 residues coordinate Ca(2+): Asp204 and Glu207. His224 contributes to the Zn(2+) binding site. Glu225 is a catalytic residue. Residues His228 and His234 each contribute to the Zn(2+) site. Hemopexin repeat units follow at residues 291 to 341, 342 to 387, 389 to 437, and 438 to 481; these read PDLC…FPQL, MSNV…GFPR, VQRI…FSGV, and NGQI…WIGC. Cys294 and Cys481 are disulfide-bonded. N-linked (GlcNAc...) asparagine glycosylation is present at Asn297.

Belongs to the peptidase M10A family. It depends on Zn(2+) as a cofactor. Ca(2+) serves as cofactor. Post-translationally, autoactivates at least at the 105-Asn-|-Tyr-106 site. In terms of tissue distribution, expressed in the enamel organ.

It is found in the secreted. Its subcellular location is the extracellular space. The protein localises to the extracellular matrix. Degrades amelogenin, the major protein component of the enamel matrix and two of the macromolecules characterizing the cartilage extracellular matrix: aggrecan and the cartilage oligomeric matrix protein (COMP). May play a central role in tooth enamel formation. Cleaves aggrecan at the '360-Ser-|-Phe-361' site. The protein is Matrix metalloproteinase-20 (MMP20) of Bos taurus (Bovine).